Here is a 265-residue protein sequence, read N- to C-terminus: Glutamate racemase (265 aa).

Substrate contacts are provided by residues 12–13 (DS) and 44–45 (YG). The active-site Proton donor/acceptor is C75. Position 76–77 (76–77 (NT)) interacts with substrate. The Proton donor/acceptor role is filled by C186. 187–188 (TH) provides a ligand contact to substrate.

It belongs to the aspartate/glutamate racemases family.

It carries out the reaction L-glutamate = D-glutamate. The protein operates within cell wall biogenesis; peptidoglycan biosynthesis. In terms of biological role, provides the (R)-glutamate required for cell wall biosynthesis. In Pseudomonas aeruginosa (strain ATCC 15692 / DSM 22644 / CIP 104116 / JCM 14847 / LMG 12228 / 1C / PRS 101 / PAO1), this protein is Glutamate racemase.